Here is a 134-residue protein sequence, read N- to C-terminus: Methylmalonyl-CoA decarboxylase subunit gamma (134 aa).

The segment covering 28–38 (APAARPAAAPA) has biased composition (low complexity). The segment at 28–67 (APAARPAAAPAPAAPKPAAAPAPAPAPKTTAAGAGAGANT) is disordered. A compositionally biased stretch (pro residues) spans 39–53 (PAAPKPAAAPAPAPA). Residues 54-67 (PKTTAAGAGAGANT) show a composition bias toward low complexity. The region spanning 58–134 (AAGAGAGANT…NAGDILVVLS (77 aa)) is the Biotinyl-binding domain. N6-biotinyllysine is present on Lys-100.

The methylmalonyl-CoA decarboxylase is composed of four subunits: the carboxyltransferase alpha subunit (MmdA), the tunnel beta subunit (MmdB), the biotin-containing gamma subunit (MmdC) and the delta subunit (MmdD). The cofactor is biotin.

Its subcellular location is the cell membrane. The enzyme catalyses (S)-methylmalonyl-CoA + Na(+)(in) + H(+)(out) = propanoyl-CoA + Na(+)(out) + CO2. Its function is as follows. Biotin-containing subunit of the sodium ion pump methylmalonyl-CoA decarboxylase, which converts the chemical energy of a decarboxylation reaction into an electrochemical gradient of Na(+) ions across the cytoplasmic membrane, thereby creating a sodium ion motive force that is used for ATP synthesis. This is Methylmalonyl-CoA decarboxylase subunit gamma from Propionigenium modestum.